Consider the following 405-residue polypeptide: Calsequestrin-1 (405 aa).

Positions 1 to 34 (MRATDRMGARAVSELRLALLFVLVLGTPRLGVQG) are cleaved as a signal peptide. Residue tyrosine 43 is modified to Phosphotyrosine. Serine 81 bears the Phosphoserine mark. Threonine 124 is subject to Phosphothreonine. Serine 216 is modified (phosphoserine). Residue asparagine 350 is glycosylated (N-linked (GlcNAc...) asparagine). The disordered stretch occupies residues 382 to 405 (EGEINTEDDDDDDDDDDDDDDDDD).

This sequence belongs to the calsequestrin family. As to quaternary structure, monomer; increases in response to a depletion of intracellular calcium. Homodimer. Homotetramer and homopolymer. Can form linear homooligomers. Ca(2+) ions promote oligomerization. Interacts (via C-terminal end and preferentially with the monomeric form) with STIM1; this interaction increases in response to a depletion of intracellular calcium, decreases both STIM1 aggregation and clustering, interaction of STIM1 with ORAI1 and store-operated Ca(2+) entry (SOCE) activity. Interacts with ASPH and TRDN. In terms of processing, N-glycosylated. As to expression, detected in skeletal muscle (at protein level). Detected in skeletal muscle.

The protein resides in the endoplasmic reticulum. The protein localises to the sarcoplasmic reticulum. Its subcellular location is the sarcoplasmic reticulum lumen. It is found in the sarcoplasmic reticulum membrane. It localises to the mitochondrion matrix. Functionally, calsequestrin is a high-capacity, moderate affinity, calcium-binding protein and thus acts as an internal calcium store in muscle. Calcium ions are bound by clusters of acidic residues at the protein surface, often at the interface between subunits. Can bind around 80 Ca(2+) ions. Regulates the release of lumenal Ca(2+) via the calcium release channel RYR1; this plays an important role in triggering muscle contraction. Negatively regulates store-operated Ca(2+) entry (SOCE) activity. The protein is Calsequestrin-1 (Casq1) of Mus musculus (Mouse).